The primary structure comprises 2251 residues: U3 small nucleolar RNA-associated protein 10 (2251 aa).

One copy of the HEAT repeat lies at 945–983 (VVPLLLTALADAEAAIRLAAIACLAHILAICKYAGDLAK). The next 2 membrane-spanning stretches (helical) occupy residues 962 to 982 (LAAI…GDLA) and 1460 to 1480 (LLVD…LLVD).

Belongs to the HEATR1/UTP10 family. As to quaternary structure, component of the ribosomal small subunit (SSU) processome.

It localises to the nucleus. It is found in the nucleolus. Its subcellular location is the membrane. Involved in nucleolar processing of pre-18S ribosomal RNA. Involved in ribosome biosynthesis. The polypeptide is U3 small nucleolar RNA-associated protein 10 (Mycosarcoma maydis (Corn smut fungus)).